The primary structure comprises 396 residues: Actin-related protein 6 (396 aa).

This sequence belongs to the actin family. ARP6 subfamily. Interacts with CBX1 and CBX3.

Its subcellular location is the cytoplasm. It localises to the cytoskeleton. It is found in the nucleus. The protein localises to the nucleolus. Its function is as follows. Required for formation and/or maintenance of the proper nucleolar structure and function. Plays a dual role in the regulation of ribosomal DNA (rDNA) transcription. In the presence of high glucose, it maintains active rDNA transcription through H2A.Z deposition and under glucose starvation, is required for the repression of rDNA transcription, and this function may be independent of H2A.Z. This chain is Actin-related protein 6 (ACTR6), found in Gallus gallus (Chicken).